The following is a 546-amino-acid chain: MAAKEIIFHDGARTKLVEGVNLLANAVKVTLGPKGRNVVLERSFGSPVVTKDGVSVAKEIELADKVQNIGAQLVKEVASKTSDAAGDGTTTATVLAQAIVREGQKYVAAGLNPLDLKRGIDKAVAAAVEELKKISKPTTTSKEIAQVATISANGEESIGQRIAEAIDRVGKEGVITVEDGKSLADELDVVEGLQFDRGYLSPYFINNPDRQLAVLDEPFILLHDKKISNIRDLLPVLEQVAKAGRPLLIVAEDVEGEALATLVVNNIRGTLKTVAVKAPGFGDRRKALLEDIAILTGGQVIAEETGLTLEKATLQELGRAKRIEVGKENTTLIDGAGDKPNIDARVKQIRAQIADATSDYDREKLQERVAKLAGGVAVIKVGGATEVEVKEKKDRVDDALHATRAAVEEGIVPGGGVALIRVKQAIAELTGANVDQKAGINIVLRALEEPLRQIVANAGEEASVVVATVAAGSGNYGYNAATGEYGDLVESGVLDPTKVTRTALQNAASIAGLLLTTDATVHEAPKDAPPAQPAGVPGAGGTGFDF.

Residues 30–33 (TLGP), lysine 51, 87–91 (DGTTT), glycine 415, 479–481 (NAA), and aspartate 495 each bind ATP. The disordered stretch occupies residues 524–546 (APKDAPPAQPAGVPGAGGTGFDF). Over residues 537–546 (PGAGGTGFDF) the composition is skewed to gly residues.

The protein belongs to the chaperonin (HSP60) family. As to quaternary structure, forms a cylinder of 14 subunits composed of two heptameric rings stacked back-to-back. Interacts with the co-chaperonin GroES.

Its subcellular location is the cytoplasm. The enzyme catalyses ATP + H2O + a folded polypeptide = ADP + phosphate + an unfolded polypeptide.. Together with its co-chaperonin GroES, plays an essential role in assisting protein folding. The GroEL-GroES system forms a nano-cage that allows encapsulation of the non-native substrate proteins and provides a physical environment optimized to promote and accelerate protein folding. The protein is Chaperonin GroEL 2 of Burkholderia thailandensis (strain ATCC 700388 / DSM 13276 / CCUG 48851 / CIP 106301 / E264).